We begin with the raw amino-acid sequence, 520 residues long: Acetyltransferase MAT1 (520 aa).

Residues His183 and Asp456 each act as proton acceptor in the active site.

The protein belongs to the plant acyltransferase family.

Its pathway is secondary metabolite biosynthesis. In terms of biological role, acyl-CoA-dependent acyltransferase; part of the gene cluster that mediates the biosynthesis of mannosylerythritol lipids (MELs), surface-active substances that enhance the availability of water-insoluble substrates. Depending on the number of acetyl groups, mannosylerythritol lipids can be differentiated into MEL A (fully acetylated), MEL B and MEL C (monoacetylated at R-6 and R-4, respectively), and the fully deacetylated MEL D. The first step in the pathway is the generation of mannosylerythritol by the glycosyltransferase EMT1 which catalyzes the transfer of GDP-mannose to the C-4 atom of meso-erythritol. This reaction has to be stereospecific, since only mannosyl-D-erythritol is generated. The produced disaccharide is subsequently acylated with fatty acids of various lengths by the acyltransferases MAC1 and MAC2 at positions C-2 and C-3, repectively. The existence of MEL derivatives which carry an acetyl group at C-2 implies that at least MAC1 also accepts acetyl-CoA as a donor. The final step of MEL biosynthesis is the acetylation of the fully acylated mannosylerythritol lipids catalyzed by the acetyl-CoA-dependent acetyltransferase MAT1. MAT1 displays a relaxed regioselectivity and is able to transfer acetylgroups to both positions C-4 and C-6 of the mannosyl moiety. This Pseudozyma antarctica (strain T-34) (Yeast) protein is Acetyltransferase MAT1.